Here is a 313-residue protein sequence, read N- to C-terminus: MTDITMRQLLEAGVHFGHQTRYWNPKMAPYIYGARQKIHIINLEETLPAFRDALKFVKEVASKRGKVLFVGTKFAAREIVKEEATRCGMPYVDYRWLGGMLTNYKTIRQSIKRLKELEERLENEENLVGMTKKEILNLMREKEKLSANLAGIKNMGSLPDVLFVIDVEHERNAVQEANRLGITVLGIVDTNASPDNIDHVIPGNDDAIRAIRLYCKAIADTIIDARSVLELQKDEEAKEEKTKAKTTAKKVVTKKAKVAEKAQAAAEKKSEKPTTEKRPTKEAAETKETSEEPKTKEVQQPIEASKAEAEEGK.

Basic and acidic residues predominate over residues 234-243 (DEEAKEEKTK). A disordered region spans residues 234–313 (DEEAKEEKTK…ASKAEAEEGK (80 aa)). Over residues 244 to 256 (AKTTAKKVVTKKA) the composition is skewed to basic residues. A compositionally biased stretch (basic and acidic residues) spans 266-297 (AEKKSEKPTTEKRPTKEAAETKETSEEPKTKE).

This sequence belongs to the universal ribosomal protein uS2 family.

This is Small ribosomal subunit protein uS2 from Coxiella burnetii (strain Dugway 5J108-111).